An 82-amino-acid polypeptide reads, in one-letter code: Small ribosomal subunit protein bS16 (82 aa).

It belongs to the bacterial ribosomal protein bS16 family.

This chain is Small ribosomal subunit protein bS16, found in Haemophilus influenzae (strain 86-028NP).